A 273-amino-acid chain; its full sequence is Proteasome subunit beta type-7-A (273 aa).

Residues 1–37 (MSQSTVDVPPKGGFSFDLCKRNDMLTQKGLKAPSFLK) constitute a propeptide, removed in mature form. Thr-40 functions as the Nucleophile in the catalytic mechanism.

Belongs to the peptidase T1B family. In terms of assembly, component of the 20S core complex of the 26S proteasome. The 26S proteasome is composed of a core protease (CP), known as the 20S proteasome, capped at one or both ends by the 19S regulatory particle (RP/PA700). The 20S proteasome core is composed of 28 subunits that are arranged in four stacked rings, resulting in a barrel-shaped structure. The two end rings are each formed by seven alpha subunits, and the two central rings are each formed by seven beta subunits. The catalytic chamber with the active sites is on the inside of the barrel.

It is found in the cytoplasm. It localises to the nucleus. It catalyses the reaction Cleavage of peptide bonds with very broad specificity.. The proteasome is a multicatalytic proteinase complex which is characterized by its ability to cleave peptides with Arg, Phe, Tyr, Leu, and Glu adjacent to the leaving group at neutral or slightly basic pH. The proteasome has an ATP-dependent proteolytic activity. This chain is Proteasome subunit beta type-7-A (PBB1), found in Arabidopsis thaliana (Mouse-ear cress).